The sequence spans 475 residues: Aspartyl/glutamyl-tRNA(Asn/Gln) amidotransferase subunit B (475 aa).

The protein belongs to the GatB/GatE family. GatB subfamily. In terms of assembly, heterotrimer of A, B and C subunits.

It carries out the reaction L-glutamyl-tRNA(Gln) + L-glutamine + ATP + H2O = L-glutaminyl-tRNA(Gln) + L-glutamate + ADP + phosphate + H(+). The enzyme catalyses L-aspartyl-tRNA(Asn) + L-glutamine + ATP + H2O = L-asparaginyl-tRNA(Asn) + L-glutamate + ADP + phosphate + 2 H(+). In terms of biological role, allows the formation of correctly charged Asn-tRNA(Asn) or Gln-tRNA(Gln) through the transamidation of misacylated Asp-tRNA(Asn) or Glu-tRNA(Gln) in organisms which lack either or both of asparaginyl-tRNA or glutaminyl-tRNA synthetases. The reaction takes place in the presence of glutamine and ATP through an activated phospho-Asp-tRNA(Asn) or phospho-Glu-tRNA(Gln). The chain is Aspartyl/glutamyl-tRNA(Asn/Gln) amidotransferase subunit B from Chlorobaculum tepidum (strain ATCC 49652 / DSM 12025 / NBRC 103806 / TLS) (Chlorobium tepidum).